The following is a 180-amino-acid chain: ATP-dependent protease subunit HslV (180 aa).

Threonine 5 is a catalytic residue. Residues glycine 165, cysteine 168, and threonine 171 each coordinate Na(+).

It belongs to the peptidase T1B family. HslV subfamily. In terms of assembly, a double ring-shaped homohexamer of HslV is capped on each side by a ring-shaped HslU homohexamer. The assembly of the HslU/HslV complex is dependent on binding of ATP.

It is found in the cytoplasm. It catalyses the reaction ATP-dependent cleavage of peptide bonds with broad specificity.. Allosterically activated by HslU binding. Protease subunit of a proteasome-like degradation complex believed to be a general protein degrading machinery. This is ATP-dependent protease subunit HslV from Helicobacter pylori (strain HPAG1).